A 217-amino-acid polypeptide reads, in one-letter code: Somatotropin (217 aa).

The N-terminal stretch at 1–26 (MMAAGPRTSLLLAFALLCLPWTQVVG) is a signal peptide. His46 provides a ligand contact to Zn(2+). Cys79 and Cys190 form a disulfide bridge. Ser132 is subject to Phosphoserine. Residue Glu199 participates in Zn(2+) binding. An intrachain disulfide couples Cys207 to Cys215.

The protein belongs to the somatotropin/prolactin family.

It is found in the secreted. Its function is as follows. Plays an important role in growth control. Its major role in stimulating body growth is to stimulate the liver and other tissues to secrete IGF1. It stimulates both the differentiation and proliferation of myoblasts. It also stimulates amino acid uptake and protein synthesis in muscle and other tissues. The sequence is that of Somatotropin (GH1) from Bubalus bubalis (Domestic water buffalo).